Consider the following 240-residue polypeptide: Nuclear receptor-interacting protein 3 (240 aa).

The sequence is that of Nuclear receptor-interacting protein 3 (NRIP3) from Pongo abelii (Sumatran orangutan).